Reading from the N-terminus, the 562-residue chain is Arf-GAP domain and FG repeat-containing protein 1 (562 aa).

One can recognise an Arf-GAP domain in the interval 11 to 135 (EKHLKMLRDM…WYVPPEQAKV (125 aa)). The C4-type zinc-finger motif lies at 29–52 (CFDCDQRGPTYVNMTVGSFVCTSC). Phosphoserine is present on S167. The interval 168–194 (APALHLNKGTPSQSPVVGRSQAQQQEK) is disordered. Positions 176–191 (GTPSQSPVVGRSQAQQ) are enriched in polar residues. A Phosphothreonine modification is found at T177. A phosphoserine mark is found at S181 and S362. S367 carries an O-linked (GlcNAc) serine glycan.

Interacts with EPS15R and EPS15. Interacts with FCHO1. O-glycosylated.

It is found in the nucleus. It localises to the cytoplasmic vesicle. Required for vesicle docking or fusion during acrosome biogenesis. May play a role in RNA trafficking or localization. The chain is Arf-GAP domain and FG repeat-containing protein 1 (AGFG1) from Bos taurus (Bovine).